Here is a 554-residue protein sequence, read N- to C-terminus: CTP synthase (554 aa).

Positions 1 to 265 (MTPLIFVTGG…DEIVIDQFKL (265 aa)) are amidoligase domain. Ser13 is a binding site for CTP. Residue Ser13 coordinates UTP. Residues 14 to 19 (SLGKGI) and Asp71 contribute to the ATP site. Positions 71 and 139 each coordinate Mg(2+). Residues 146 to 148 (DIE), 186 to 191 (KTKPTQ), and Lys222 contribute to the CTP site. UTP is bound by residues 186-191 (KTKPTQ) and Lys222. The Glutamine amidotransferase type-1 domain maps to 292-545 (TIAVVGKYVD…VKASRARKAG (254 aa)). Residue Gly353 participates in L-glutamine binding. Cys380 functions as the Nucleophile; for glutamine hydrolysis in the catalytic mechanism. Residues 381–384 (YGMQ), Glu404, and Arg471 contribute to the L-glutamine site. Residues His518 and Glu520 contribute to the active site.

Belongs to the CTP synthase family. As to quaternary structure, homotetramer.

It carries out the reaction UTP + L-glutamine + ATP + H2O = CTP + L-glutamate + ADP + phosphate + 2 H(+). The catalysed reaction is L-glutamine + H2O = L-glutamate + NH4(+). It catalyses the reaction UTP + NH4(+) + ATP = CTP + ADP + phosphate + 2 H(+). It functions in the pathway pyrimidine metabolism; CTP biosynthesis via de novo pathway; CTP from UDP: step 2/2. Allosterically activated by GTP, when glutamine is the substrate; GTP has no effect on the reaction when ammonia is the substrate. The allosteric effector GTP functions by stabilizing the protein conformation that binds the tetrahedral intermediate(s) formed during glutamine hydrolysis. Inhibited by the product CTP, via allosteric rather than competitive inhibition. Its function is as follows. Catalyzes the ATP-dependent amination of UTP to CTP with either L-glutamine or ammonia as the source of nitrogen. Regulates intracellular CTP levels through interactions with the four ribonucleotide triphosphates. This Xylella fastidiosa (strain M12) protein is CTP synthase.